A 303-amino-acid polypeptide reads, in one-letter code: MLLSKAQYDEIALFITTLRPTRQCMRRLKERFPCQSQSTLLSIFSQEYQKLIKRTHAKHHTPEAIEMYYARYLNEVARDPTVPILLELANEVDFSPALIARTVLERFLQDHDGQPPTKPILSSMLRDPSLIPDPVLANQVHLCIINDCCNGPLVDGIKHAIGHEHEVLLRQKLKEHNLAFLDEDQLRLKGYDKTPDVILEVPVAVDGHVIHWIESKASFGDEASHNTYLHDQFWSYWNRFGPGLVIYWYGFIEELDCNRERGILLKDGFPESLVTLGSCMAQNAEHGQHTKSRLSETHQETQS.

The protein resides in the nucleus. It is found in the cytoplasm. Its function is as follows. May play a role in erythroid cell differentiation. The protein is CDAN1-interacting nuclease 1 (cdin1) of Xenopus tropicalis (Western clawed frog).